Reading from the N-terminus, the 494-residue chain is tRNA-2-methylthio-N(6)-dimethylallyladenosine synthase (494 aa).

Residues 12 to 131 (PTYRVVTYGC…LPVLLKRARH (120 aa)) enclose the MTTase N-terminal domain. [4Fe-4S] cluster contacts are provided by Cys21, Cys60, Cys94, Cys168, Cys172, and Cys175. The Radical SAM core domain maps to 154–385 (RDSAYSAWVS…ELVDDIAWQE (232 aa)). The 71-residue stretch at 387–457 (KAQVGRAVEV…PHHLVADGGL (71 aa)) folds into the TRAM domain.

Belongs to the methylthiotransferase family. MiaB subfamily. Monomer. It depends on [4Fe-4S] cluster as a cofactor.

It is found in the cytoplasm. It carries out the reaction N(6)-dimethylallyladenosine(37) in tRNA + (sulfur carrier)-SH + AH2 + 2 S-adenosyl-L-methionine = 2-methylsulfanyl-N(6)-dimethylallyladenosine(37) in tRNA + (sulfur carrier)-H + 5'-deoxyadenosine + L-methionine + A + S-adenosyl-L-homocysteine + 2 H(+). Its function is as follows. Catalyzes the methylthiolation of N6-(dimethylallyl)adenosine (i(6)A), leading to the formation of 2-methylthio-N6-(dimethylallyl)adenosine (ms(2)i(6)A) at position 37 in tRNAs that read codons beginning with uridine. This Cutibacterium acnes (strain DSM 16379 / KPA171202) (Propionibacterium acnes) protein is tRNA-2-methylthio-N(6)-dimethylallyladenosine synthase.